The chain runs to 295 residues: Ankyrin repeat and SOCS box protein 17 (295 aa).

An ANK repeat occupies 146-176 (SGITPLLYVAQTRQSNILKILLQYGILEREK). The SOCS box domain occupies 232–295 (LGRRPIISNW…RLQKYLNLES (64 aa)).

It belongs to the ankyrin SOCS box (ASB) family.

Its pathway is protein modification; protein ubiquitination. Functionally, may be a substrate-recognition component of a SCF-like ECS (Elongin-Cullin-SOCS-box protein) E3 ubiquitin-protein ligase complex which mediates the ubiquitination and subsequent proteasomal degradation of target proteins. The chain is Ankyrin repeat and SOCS box protein 17 (ASB17) from Canis lupus familiaris (Dog).